Consider the following 868-residue polypeptide: Homeobox-leucine zipper protein HOX29 (868 aa).

The segment at residues 9–72 (DASKYVRYTP…NRRCREKQRK (64 aa)) is a DNA-binding region (homeobox). Residues 64 to 106 (RRCREKQRKESSRLQALNRKLTAMNKLLMEENDRLQKQVSQLV) are a coiled coil. The disordered stretch occupies residues 150–171 (VTSGHHHQQQQHNVVQPPPRDA). The region spanning 169–397 (RDASPAGLMS…VAHEDTRSVI (229 aa)) is the START domain.

Belongs to the HD-ZIP homeobox family. Class III subfamily. In terms of tissue distribution, expressed in phloem.

Its subcellular location is the nucleus. Functionally, probable transcription factor that may be necessary for the proper patterning of vascular bundles. This chain is Homeobox-leucine zipper protein HOX29 (HOX29), found in Oryza sativa subsp. japonica (Rice).